A 226-amino-acid polypeptide reads, in one-letter code: 3-dehydroquinate dehydratase (226 aa).

3-dehydroquinate contacts are provided by residues S21, 42–44 (EVR), and R70. The Proton donor/acceptor role is filled by H124. K149 serves as the catalytic Schiff-base intermediate with substrate. 3-dehydroquinate contacts are provided by R187, T206, and Q210.

It belongs to the type-I 3-dehydroquinase family. Homodimer.

It carries out the reaction 3-dehydroquinate = 3-dehydroshikimate + H2O. It functions in the pathway metabolic intermediate biosynthesis; chorismate biosynthesis; chorismate from D-erythrose 4-phosphate and phosphoenolpyruvate: step 3/7. In terms of biological role, involved in the third step of the chorismate pathway, which leads to the biosynthesis of aromatic amino acids. Catalyzes the cis-dehydration of 3-dehydroquinate (DHQ) and introduces the first double bond of the aromatic ring to yield 3-dehydroshikimate. This is 3-dehydroquinate dehydratase from Methanothrix thermoacetophila (strain DSM 6194 / JCM 14653 / NBRC 101360 / PT) (Methanosaeta thermophila).